Reading from the N-terminus, the 447-residue chain is UMP-CMP kinase 2, mitochondrial (447 aa).

A mitochondrion-targeting transit peptide spans 1–73; sequence MALISRPRAP…ELLGPPGRSY (73 aa). ATP is bound at residue 259-266; it reads GLDATGKT. Residues 380-412 are a coiled coil; sequence EERVRRLQGRGQEKTKEEAELEANNVFRQKVEM.

This sequence belongs to the thymidylate kinase family. In terms of tissue distribution, strongly expressed in the brain.

The protein localises to the mitochondrion. It carries out the reaction CMP + ATP = CDP + ADP. The enzyme catalyses dCMP + ATP = dCDP + ADP. The catalysed reaction is a 2'-deoxyribonucleoside 5'-diphosphate + ATP = a 2'-deoxyribonucleoside 5'-triphosphate + ADP. It catalyses the reaction a ribonucleoside 5'-diphosphate + ATP = a ribonucleoside 5'-triphosphate + ADP. Mitochondrial nucleotide monophosphate kinase needed for salvage dNTP synthesis that mediates immunomodulatory and antiviral activities through IFN-dependent and IFN-independent pathways. Restricts the replication of multiple viruses including flaviviruses or coronaviruses. Together with viperin/RSAD2 and ddhCTP, suppresses the replication of several coronaviruses through inhibition of the viral RNA-dependent RNA polymerase activities. Concerning flaviviruses, restricts RNA translation when localized to the mitochondria independently of its kinase activity. Is able to phosphorylate dUMP, dCMP, CMP, UMP and monophosphates of the pyrimidine nucleoside analogs ddC, dFdC, araC, BVDU and FdUrd with ATP as phosphate donor. Efficacy is highest for dUMP followed by dCMP while CMP and UMP are poor substrates. Controls therefore mitochondrial DNA synthesis by supplying required deoxyribonucleotides. CMPK2-dependent mitochondrial DNA synthesis is necessary for the production of oxidized mitochondrial DNA fragments after exposure to NLRP3 activators. In turn, cytosolic oxidized mtDNA associates with the NLRP3 inflammasome complex and is required for its activation. In Mus musculus (Mouse), this protein is UMP-CMP kinase 2, mitochondrial (Cmpk2).